Here is a 160-residue protein sequence, read N- to C-terminus: SsrA-binding protein (160 aa).

The disordered stretch occupies residues 132–160; sequence KIHDKRDDMQKKDAQQEIARALKSSNRYE. Residues 135 to 146 show a composition bias toward basic and acidic residues; that stretch reads DKRDDMQKKDAQ.

The protein belongs to the SmpB family.

Its subcellular location is the cytoplasm. Functionally, required for rescue of stalled ribosomes mediated by trans-translation. Binds to transfer-messenger RNA (tmRNA), required for stable association of tmRNA with ribosomes. tmRNA and SmpB together mimic tRNA shape, replacing the anticodon stem-loop with SmpB. tmRNA is encoded by the ssrA gene; the 2 termini fold to resemble tRNA(Ala) and it encodes a 'tag peptide', a short internal open reading frame. During trans-translation Ala-aminoacylated tmRNA acts like a tRNA, entering the A-site of stalled ribosomes, displacing the stalled mRNA. The ribosome then switches to translate the ORF on the tmRNA; the nascent peptide is terminated with the 'tag peptide' encoded by the tmRNA and targeted for degradation. The ribosome is freed to recommence translation, which seems to be the essential function of trans-translation. This Leptospira borgpetersenii serovar Hardjo-bovis (strain JB197) protein is SsrA-binding protein.